The sequence spans 131 residues: Neurophysin 2 (131 aa).

Cystine bridges form between Cys10–Cys55, Cys13–Cys27, Cys21–Cys45, Cys28–Cys35, Cys62–Cys74, Cys68–Cys86, and Cys75–Cys80.

Belongs to the vasopressin/oxytocin family.

The protein localises to the secreted. In terms of biological role, neurophysin 2 specifically binds vasopressin. This is Neurophysin 2 from Anser anser anser (Western greylag goose).